The chain runs to 169 residues: Putative outer membrane protein BBA03 (169 aa).

Its subcellular location is the cell outer membrane. This is Putative outer membrane protein BBA03 from Borreliella burgdorferi (strain ATCC 35210 / DSM 4680 / CIP 102532 / B31) (Borrelia burgdorferi).